The primary structure comprises 496 residues: NADH-quinone oxidoreductase subunit N (496 aa).

Transmembrane regions (helical) follow at residues 8–28 (LLST…VGLI), 37–57 (MFPL…YDFF), 73–93 (QFAG…VLST), 110–130 (LLLL…LLTM), 131–151 (YVGL…HPND), 162–182 (LVLG…IYGL), 203–223 (TILA…LVPF), 235–255 (PAPI…AALV), 271–291 (GLIL…LMAF), 300–320 (MAYS…AVSI), 341–361 (GVLF…AVIT), 386–406 (AAVL…AGFV), 421–441 (VWIA…YLSI), and 464–484 (FGMI…TPLA).

Belongs to the complex I subunit 2 family. NDH-1 is composed of 14 different subunits. Subunits NuoA, H, J, K, L, M, N constitute the membrane sector of the complex.

The protein resides in the cell membrane. The catalysed reaction is a quinone + NADH + 5 H(+)(in) = a quinol + NAD(+) + 4 H(+)(out). Functionally, NDH-1 shuttles electrons from NADH, via FMN and iron-sulfur (Fe-S) centers, to quinones in the respiratory chain. The immediate electron acceptor for the enzyme in this species is believed to be a menaquinone. Couples the redox reaction to proton translocation (for every two electrons transferred, four hydrogen ions are translocated across the cytoplasmic membrane), and thus conserves the redox energy in a proton gradient. This Desulfitobacterium hafniense (strain DSM 10664 / DCB-2) protein is NADH-quinone oxidoreductase subunit N.